The following is a 232-amino-acid chain: Large ribosomal subunit protein uL3 (232 aa).

It belongs to the universal ribosomal protein uL3 family. As to quaternary structure, part of the 50S ribosomal subunit. Forms a cluster with proteins L14 and L19.

Functionally, one of the primary rRNA binding proteins, it binds directly near the 3'-end of the 23S rRNA, where it nucleates assembly of the 50S subunit. In Hydrogenobaculum sp. (strain Y04AAS1), this protein is Large ribosomal subunit protein uL3.